The following is an 84-amino-acid chain: Toluene-4-monooxygenase system, hydroxylase component subunit gamma (84 aa).

It belongs to the TmoB/XamoB family. As to quaternary structure, the alkene monooxygenase multicomponent enzyme system is composed of an electron transfer component and a monooxygenase component interacting with the effector protein TmoD. The electron transfer component is composed of a ferredoxin reductase (TmoF) and a ferredoxin (TmoC), and the monooxygenase component is formed by a heterohexamer (dimer of heterotrimers) of two alpha subunits (TmoA), two beta subunits (TmoE) and two gamma subunits (TmoB).

It catalyses the reaction toluene + NADH + O2 + H(+) = 4-methylphenol + NAD(+) + H2O. Its pathway is xenobiotic degradation; toluene degradation. Inhibited by Zn(2+) and Cu(2+). Its function is as follows. Component of the toluene-4-monooxygenase multicomponent enzyme system which catalyzes the O2- and NADH-dependent hydroxylation of toluene to form p-cresol. Also able to convert benzene to phenol, catechol, and 1,2,3-trihydroxybenzene by successive hydroxylations. This is Toluene-4-monooxygenase system, hydroxylase component subunit gamma from Ectopseudomonas mendocina (Pseudomonas mendocina).